A 150-amino-acid chain; its full sequence is Deoxyuridine 5'-triphosphate nucleotidohydrolase (150 aa).

Residues 70–72 (RSG), N82, 86–88 (LID), and M96 each bind substrate.

Belongs to the dUTPase family. Mg(2+) serves as cofactor.

It catalyses the reaction dUTP + H2O = dUMP + diphosphate + H(+). It functions in the pathway pyrimidine metabolism; dUMP biosynthesis; dUMP from dCTP (dUTP route): step 2/2. Its function is as follows. This enzyme is involved in nucleotide metabolism: it produces dUMP, the immediate precursor of thymidine nucleotides and it decreases the intracellular concentration of dUTP so that uracil cannot be incorporated into DNA. The polypeptide is Deoxyuridine 5'-triphosphate nucleotidohydrolase (Baumannia cicadellinicola subsp. Homalodisca coagulata).